A 142-amino-acid chain; its full sequence is Small ribosomal subunit protein uS12 (142 aa).

The protein belongs to the universal ribosomal protein uS12 family.

This Tetrahymena thermophila protein is Small ribosomal subunit protein uS12.